A 4599-amino-acid chain; its full sequence is Low-density lipoprotein receptor-related protein 1B (4599 aa).

A signal peptide spans 1–20 (MSEFLLALLTLSGLLPIARV). Residues 25–4444 (ADRDQQLCDP…KSDHISTRSI (4420 aa)) are Extracellular-facing. LDL-receptor class A domains are found at residues 31 to 70 (LCDP…DTCP) and 76 to 114 (KCPL…VHCQ). 12 cysteine pairs are disulfide-bonded: Cys-32/Cys-45, Cys-39/Cys-58, Cys-52/Cys-69, Cys-77/Cys-90, Cys-84/Cys-103, Cys-97/Cys-113, Cys-120/Cys-129, Cys-125/Cys-138, Cys-140/Cys-153, Cys-159/Cys-169, Cys-165/Cys-178, and Cys-180/Cys-193. The region spanning 116–154 (LLSNCQQLNCQYKCTMVRNSTRCYCEDGFEITEDGRSCK) is the EGF-like 1 domain. An N-linked (GlcNAc...) asparagine glycan is attached at Asn-134. An EGF-like 2; calcium-binding domain is found at 155–194 (DQDECAVYGTCSQTCRNTHGSYTCSCVEGYLMQPDNRSCK). N-linked (GlcNAc...) asparagine glycosylation is found at Asn-190, Asn-220, Asn-313, and Asn-360. LDL-receptor class B repeat units lie at residues 295–337 (RNLY…DPIA), 338–381 (GKLF…DLVN), and 382–425 (KLVY…FEDY). N-linked (GlcNAc...) asparagine glycosylation occurs at Asn-443. The EGF-like 3 domain maps to 471–517 (RSHACEVDPYGMPGGCSHICLLSSSYKTRTCRCRTGFNLGSDGRSCK). LDL-receptor class B repeat units lie at residues 568-610 (NYIY…DWIG), 611-656 (NNLY…DPVN), 657-706 (GWMY…DFHT), and 707-750 (NTLY…HGNY). Asn-725 and Asn-758 each carry an N-linked (GlcNAc...) asparagine glycan. In terms of domain architecture, EGF-like 4 spans 794 to 834 (GDNMCRVNNGGCSTLCLAIPGGRVCACADNQLLDENGTTCT). Disulfide bonds link Cys-798–Cys-809, Cys-805–Cys-818, Cys-820–Cys-833, Cys-845–Cys-857, Cys-852–Cys-870, and Cys-864–Cys-881. The N-linked (GlcNAc...) asparagine glycan is linked to Asn-829. Residues 844-882 (ICKAGEFRCKNRHCIQARWKCDGDDDCLDGSDEDSVNCF) enclose the LDL-receptor class A 3 domain. Residue Asn-883 is glycosylated (N-linked (GlcNAc...) asparagine). LDL-receptor class A domains are found at residues 885–923 (SCPD…QTCT), 926–963 (TCQV…ASCE), 966–1003 (TCEP…VGCV), 1005–1043 (SCFD…INCT), 1052–1089 (GCNG…KGCN), 1094–1132 (LCDH…DDCD), and 1135–1174 (LCGP…YLCD). 15 disulfides stabilise this stretch: Cys-886-Cys-898, Cys-893-Cys-911, Cys-905-Cys-922, Cys-927-Cys-939, Cys-934-Cys-952, Cys-946-Cys-962, Cys-967-Cys-980, Cys-975-Cys-993, Cys-987-Cys-1002, Cys-1006-Cys-1018, Cys-1013-Cys-1031, Cys-1025-Cys-1042, Cys-1053-Cys-1066, Cys-1060-Cys-1079, and Cys-1073-Cys-1088. The N-linked (GlcNAc...) asparagine glycan is linked to Asn-919. Asn-1041 carries an N-linked (GlcNAc...) asparagine glycan. Asn-1089 carries an N-linked (GlcNAc...) asparagine glycan. Cystine bridges form between Cys-1095/Cys-1109, Cys-1103/Cys-1122, Cys-1116/Cys-1131, Cys-1136/Cys-1150, Cys-1143/Cys-1163, and Cys-1157/Cys-1173. Asn-1145 carries an N-linked (GlcNAc...) asparagine glycan. EGF-like domains are found at residues 1174–1213 (DECS…KTCE) and 1214–1253 (IVDY…ESCT). Asn-1209 carries N-linked (GlcNAc...) asparagine glycosylation. Residue Asn-1298 is glycosylated (N-linked (GlcNAc...) asparagine). LDL-receptor class B repeat units follow at residues 1300–1346 (SLLY…DWIA), 1347–1389 (GNIY…DPRY), 1390–1436 (GILF…DHFE), 1437–1480 (KRIV…LYGS), and 1481–1522 (EVYW…YHPS). N-linked (GlcNAc...) asparagine glycans are attached at residues Asn-1502, Asn-1549, and Asn-1636. The EGF-like 7 domain occupies 1527 to 1570 (APNPCAANDGKGPCSHMCLINHNRSAACACPHLMKLSSDKKTCY). LDL-receptor class B repeat units lie at residues 1618–1660 (ERLY…DWVS), 1661–1704 (RNLY…HPVR), 1705–1744 (GKLY…DYVE), and 1745–1787 (NKLY…TIMD). N-linked (GlcNAc...) asparagine glycosylation is found at Asn-1754 and Asn-1816. The region spanning 1834–1875 (GSNSCQLNNGGCSQLCLPTSETTRTCMCTVGYYLQKNRMSCQ) is the EGF-like 8 domain. 3 cysteine pairs are disulfide-bonded: Cys-1838–Cys-1849, Cys-1845–Cys-1859, and Cys-1861–Cys-1874. An N-linked (GlcNAc...) asparagine glycan is attached at Asn-1921. 4 LDL-receptor class B repeats span residues 1922 to 1964 (DTIY…DWIA), 1965 to 2007 (GNIY…HPEK), 2008 to 2051 (GLLF…DYEE), and 2052 to 2095 (NKLY…FGAY). Asn-1983 is a glycosylation site (N-linked (GlcNAc...) asparagine). N-linked (GlcNAc...) asparagine glycosylation occurs at Asn-2105. The region spanning 2143–2183 (GTNVCARDNGGCKQLCLYRGNSRRTCACAHGYLAEDGVTCL) is the EGF-like 9 domain. 3 disulfides stabilise this stretch: Cys-2147/Cys-2158, Cys-2154/Cys-2168, and Cys-2170/Cys-2182. 5 LDL-receptor class B repeats span residues 2239-2280 (NRIF…HRAW), 2281-2329 (DTLY…DECQ), 2330-2374 (NLMF…DYRA), 2375-2416 (EKLY…VYDN), and 2417-2459 (YIFW…VAND). 3 N-linked (GlcNAc...) asparagine glycosylation sites follow: Asn-2458, Asn-2488, and Asn-2507. In terms of domain architecture, EGF-like 10 spans 2464 to 2504 (ELSPCALLNGGCHDLCLLTPNGRVNCSCRGDRILLEDNRCV). Residues 2509–2548 (SCNAYSEFECGNGECIDYQLTCDGIPHCKDKSDEKLLYCE) form the LDL-receptor class A 11 domain. Cystine bridges form between Cys-2510-Cys-2523, Cys-2518-Cys-2536, and Cys-2530-Cys-2547. Asn-2549 carries an N-linked (GlcNAc...) asparagine glycan. 6 consecutive LDL-receptor class A domains span residues 2551–2587 (SCRR…LDCK), 2590–2626 (TCAT…KNCN), 2629–2675 (DCTH…LKCP), 2681–2717 (KCEE…FHCD), 2719–2757 (SCSW…SICG), and 2760–2800 (TCAA…AGCA). 6 disulfide bridges follow: Cys-2552/Cys-2564, Cys-2559/Cys-2577, Cys-2571/Cys-2586, Cys-2591/Cys-2603, Cys-2598/Cys-2616, and Cys-2610/Cys-2625. Residues Asn-2626 and Asn-2647 are each glycosylated (N-linked (GlcNAc...) asparagine). 12 cysteine pairs are disulfide-bonded: Cys-2630/Cys-2652, Cys-2646/Cys-2665, Cys-2659/Cys-2674, Cys-2682/Cys-2694, Cys-2689/Cys-2707, Cys-2701/Cys-2716, Cys-2720/Cys-2732, Cys-2727/Cys-2745, Cys-2739/Cys-2756, Cys-2761/Cys-2774, Cys-2768/Cys-2787, and Cys-2781/Cys-2799. Asn-2802 is a glycosylation site (N-linked (GlcNAc...) asparagine). 3 LDL-receptor class A domains span residues 2804 to 2841 (TCDE…PQCG), 2844 to 2885 (QCGT…PKCK), and 2890 to 2926 (SCNS…RNCH). Disulfide bonds link Cys-2805/Cys-2817, Cys-2812/Cys-2830, Cys-2824/Cys-2840, Cys-2845/Cys-2857, Cys-2852/Cys-2871, Cys-2865/Cys-2884, Cys-2891/Cys-2903, Cys-2898/Cys-2916, Cys-2910/Cys-2925, Cys-2930/Cys-2942, Cys-2938/Cys-2951, Cys-2953/Cys-2966, Cys-2972/Cys-2982, Cys-2978/Cys-2991, and Cys-2993/Cys-3007. The N-linked (GlcNAc...) asparagine glycan is linked to Asn-2892. The 41-residue stretch at 2927–2967 (INECLSKKVSGCSQDCQDLPVSYKCKCWPGFQLKDDGKTCV) folds into the EGF-like 11 domain. Positions 2968–3008 (DIDECSSGFPCSQQCINTYGTYKCLCTDGYEIQPDNPNGCK) constitute an EGF-like 12; calcium-binding domain. 3 N-linked (GlcNAc...) asparagine glycosylation sites follow: Asn-3034, Asn-3066, and Asn-3076. LDL-receptor class B repeat units lie at residues 3055-3098 (EFIY…DWIG), 3099-3141 (KNLY…DPQA), 3142-3185 (GYLY…DYVN), 3186-3224 (RRLY…TLFE), and 3225-3268 (DYIY…HSYR). A glycan (N-linked (GlcNAc...) asparagine) is linked at Asn-3164. An EGF-like 13 domain is found at 3273–3314 (SKHLCMINNGGCSHLCLLAPGKTHTCACPTNFYLAADNRTCL). 2 N-linked (GlcNAc...) asparagine glycosylation sites follow: Asn-3310 and Asn-3316. 12 LDL-receptor class A domains span residues 3316–3353 (NCTA…DDCP), 3356–3392 (RCQP…LNCD), 3395–3432 (VCLS…RDCP), 3435–3472 (SCSP…ANCD), 3475–3511 (TCGP…ENCK), 3514–3550 (TCTL…RNCE), 3552–3588 (SCSK…KSCE), 3593–3629 (TCSS…MDCV), 3631–3668 (ECKE…ENCE), 3673–3711 (ICRA…DMCV), 3714–3752 (LCPS…DHCG), and 3761–3797 (PCKK…QGCR). Disulfide bonds link Cys-3317-Cys-3329, Cys-3324-Cys-3342, Cys-3336-Cys-3352, Cys-3357-Cys-3369, Cys-3364-Cys-3382, Cys-3376-Cys-3391, Cys-3396-Cys-3409, Cys-3403-Cys-3422, Cys-3416-Cys-3431, Cys-3436-Cys-3449, Cys-3443-Cys-3462, Cys-3456-Cys-3471, Cys-3476-Cys-3488, Cys-3483-Cys-3501, Cys-3495-Cys-3510, Cys-3515-Cys-3527, Cys-3522-Cys-3540, Cys-3534-Cys-3549, Cys-3553-Cys-3565, Cys-3560-Cys-3578, Cys-3572-Cys-3587, Cys-3594-Cys-3606, Cys-3601-Cys-3619, Cys-3613-Cys-3628, Cys-3632-Cys-3645, Cys-3639-Cys-3658, Cys-3652-Cys-3667, Cys-3674-Cys-3686, Cys-3681-Cys-3699, Cys-3693-Cys-3710, Cys-3715-Cys-3729, Cys-3723-Cys-3742, Cys-3736-Cys-3751, Cys-3762-Cys-3774, Cys-3769-Cys-3787, Cys-3781-Cys-3796, Cys-3805-Cys-3818, Cys-3812-Cys-3827, Cys-3829-Cys-3842, Cys-3848-Cys-3858, Cys-3854-Cys-3867, and Cys-3869-Cys-3880. Asn-3682 carries N-linked (GlcNAc...) asparagine glycosylation. EGF-like domains are found at residues 3801–3843 (TEYT…RQCE) and 3844–3881 (DLNE…NTCI). Asn-3877, Asn-3894, and Asn-3906 each carry an N-linked (GlcNAc...) asparagine glycan. LDL-receptor class B repeat units lie at residues 3933–3980 (DMII…DWVA), 3981–4038 (GNIY…NPKR), 4039–4082 (GMMY…DYFS), and 4083–4127 (ERIY…FEDY). Residue Asn-4017 is glycosylated (N-linked (GlcNAc...) asparagine). EGF-like domains are found at residues 4171–4208 (DLPN…GTCN), 4213–4249 (LDDS…ERCE), 4249–4285 (EVNH…PNCG), 4285–4321 (GKTV…DRCQ), 4321–4357 (QYYV…PKCE), 4357–4392 (EVDK…SSCQ), and 4390–4427 (SCQL…TQCE). N-linked (GlcNAc...) asparagine glycosylation occurs at Asn-4204. Cystine bridges form between Cys-4217/Cys-4227, Cys-4221/Cys-4237, Cys-4253/Cys-4263, Cys-4257/Cys-4273, Cys-4275/Cys-4284, Cys-4289/Cys-4299, Cys-4293/Cys-4309, Cys-4311/Cys-4320, Cys-4325/Cys-4335, Cys-4329/Cys-4345, and Cys-4347/Cys-4356. N-linked (GlcNAc...) asparagine glycosylation is present at Asn-4381. Disulfide bonds link Cys-4394/Cys-4404, Cys-4398/Cys-4415, and Cys-4417/Cys-4426. N-linked (GlcNAc...) asparagine glycosylation is present at Asn-4420. The helical transmembrane segment at 4445 to 4467 (AIIVPLVLLVTLITTLVIGLVLC) threads the bilayer. Residues 4468 to 4599 (KRKRRTKTIR…IEIGIRETVA (132 aa)) are Cytoplasmic-facing. 2 consecutive short sequence motifs (endocytosis signal) follow at residues 4492 to 4495 (NPSY) and 4559 to 4562 (NPVY).

This sequence belongs to the LDLR family. Binds LRPAP1, PLAU, PLAT and SERPINE1; binding is followed by internalization and degradation of the ligands. As to expression, expressed in thyroid gland and in salivary gland, as well as in adult and fetal brain.

It localises to the membrane. Its function is as follows. Potential cell surface proteins that bind and internalize ligands in the process of receptor-mediated endocytosis. This Homo sapiens (Human) protein is Low-density lipoprotein receptor-related protein 1B (LRP1B).